We begin with the raw amino-acid sequence, 106 residues long: NADH-quinone oxidoreductase subunit K (106 aa).

A run of 3 helical transmembrane segments spans residues 10-30 (IHYY…GVMV), 35-55 (VLIF…FVTF), and 67-87 (VVFF…AIVI).

It belongs to the complex I subunit 4L family. As to quaternary structure, NDH-1 is composed of 14 different subunits. Subunits NuoA, H, J, K, L, M, N constitute the membrane sector of the complex.

The protein resides in the cell inner membrane. The catalysed reaction is a quinone + NADH + 5 H(+)(in) = a quinol + NAD(+) + 4 H(+)(out). In terms of biological role, NDH-1 shuttles electrons from NADH, via FMN and iron-sulfur (Fe-S) centers, to quinones in the respiratory chain. The immediate electron acceptor for the enzyme in this species is believed to be ubiquinone. Couples the redox reaction to proton translocation (for every two electrons transferred, four hydrogen ions are translocated across the cytoplasmic membrane), and thus conserves the redox energy in a proton gradient. The polypeptide is NADH-quinone oxidoreductase subunit K (Leptospira borgpetersenii serovar Hardjo-bovis (strain JB197)).